Reading from the N-terminus, the 336-residue chain is uncharacterized protein (336 aa).

NADP(+)-binding residues include K39 and Y166.

Belongs to the NAD(P)-dependent epimerase/dehydratase family. Dihydroflavonol-4-reductase subfamily.

The protein localises to the cytoplasm. It is found in the nucleus. This is an uncharacterized protein from Schizosaccharomyces pombe (strain 972 / ATCC 24843) (Fission yeast).